The chain runs to 122 residues: Large ribosomal subunit protein bL12 (122 aa).

It belongs to the bacterial ribosomal protein bL12 family. In terms of assembly, homodimer. Part of the ribosomal stalk of the 50S ribosomal subunit. Forms a multimeric L10(L12)X complex, where L10 forms an elongated spine to which 2 to 4 L12 dimers bind in a sequential fashion. Binds GTP-bound translation factors.

Functionally, forms part of the ribosomal stalk which helps the ribosome interact with GTP-bound translation factors. Is thus essential for accurate translation. The protein is Large ribosomal subunit protein bL12 of Streptococcus pneumoniae serotype 19F (strain G54).